The primary structure comprises 111 residues: Magnetosome protein MamF (111 aa).

The Cytoplasmic segment spans residues Met1–Arg17. The chain crosses the membrane as a helical span at residues Ser18 to Ser38. The Lumenal portion of the chain corresponds to Arg39 to Gln50. A helical transmembrane segment spans residues Gly51–Gly71. Lys72 is a topological domain (cytoplasmic). Residues Trp73–Val93 traverse the membrane as a helical segment. At Ala94–Ile111 the chain is on the lumenal side.

This sequence belongs to the magnetosome MamF/MmsF protein family. As to quaternary structure, may form homooligomers. In terms of processing, subject to cleavage or degradation; identified by N-terminal sequencing of proteins that are about 103, 92 and 15 kDa in size.

It is found in the magnetosome membrane. Functionally, plays a role in regulating magnetite crystal size; partially redundant function with MmsF. The protein is Magnetosome protein MamF of Magnetospirillum gryphiswaldense (strain DSM 6361 / JCM 21280 / NBRC 15271 / MSR-1).